The following is a 267-amino-acid chain: NAD kinase 2 (267 aa).

Aspartate 52 (proton acceptor) is an active-site residue. NAD(+)-binding positions include 52-53 (DA), 124-125 (NE), arginine 151, aspartate 153, 164-169 (TAYNKS), and alanine 188.

This sequence belongs to the NAD kinase family. A divalent metal cation is required as a cofactor.

It localises to the cytoplasm. It catalyses the reaction NAD(+) + ATP = ADP + NADP(+) + H(+). Involved in the regulation of the intracellular balance of NAD and NADP, and is a key enzyme in the biosynthesis of NADP. Catalyzes specifically the phosphorylation on 2'-hydroxyl of the adenosine moiety of NAD to yield NADP. The sequence is that of NAD kinase 2 from Bacillus anthracis.